Here is a 49-residue protein sequence, read N- to C-terminus: Osteocalcin (49 aa).

The region spanning 1-47 (YLDHGLGAPAPYVDPLEPKREVCELNPDCDELADQMGFQEAYRRFYG) is the Gla domain. Proline 9 bears the 4-hydroxyproline mark. Ca(2+)-binding residues include glutamate 17, glutamate 21, glutamate 24, and aspartate 30. A 4-carboxyglutamate mark is found at glutamate 17, glutamate 21, and glutamate 24. A disulfide bridge links cysteine 23 with cysteine 29.

It belongs to the osteocalcin/matrix Gla protein family. In terms of processing, gamma-carboxyglutamic acid residues are formed by vitamin K dependent carboxylation. These residues are essential for the binding of calcium.

The protein localises to the secreted. In terms of biological role, the carboxylated form is one of the main organic components of the bone matrix, which constitutes 1-2% of the total bone protein: it acts as a negative regulator of bone formation and is required to limit bone formation without impairing bone resorption or mineralization. The carboxylated form binds strongly to apatite and calcium. Its function is as follows. The uncarboxylated form acts as a hormone secreted by osteoblasts, which regulates different cellular processes, such as energy metabolism, male fertility and brain development. Regulates of energy metabolism by acting as a hormone favoring pancreatic beta-cell proliferation, insulin secretion and sensitivity and energy expenditure. Uncarboxylated osteocalcin hormone also promotes testosterone production in the testes: acts as a ligand for G protein-coupled receptor GPRC6A at the surface of Leydig cells, initiating a signaling response that promotes the expression of enzymes required for testosterone synthesis in a CREB-dependent manner. Also acts as a regulator of brain development: osteocalcin hormone crosses the blood-brain barrier and acts as a ligand for GPR158 on neurons, initiating a signaling response that prevents neuronal apoptosis in the hippocampus, favors the synthesis of all monoamine neurotransmitters and inhibits that of gamma-aminobutyric acid (GABA). Osteocalcin also crosses the placenta during pregnancy and maternal osteocalcin is required for fetal brain development. The polypeptide is Osteocalcin (Lama guanicoe (Guanaco)).